We begin with the raw amino-acid sequence, 248 residues long: Ribosomal RNA small subunit methyltransferase J (248 aa).

Residues 98-99, 114-115, 150-151, and Asp-168 contribute to the S-adenosyl-L-methionine site; these read RD, ER, and SS.

It belongs to the methyltransferase superfamily. RsmJ family.

Its subcellular location is the cytoplasm. The enzyme catalyses guanosine(1516) in 16S rRNA + S-adenosyl-L-methionine = N(2)-methylguanosine(1516) in 16S rRNA + S-adenosyl-L-homocysteine + H(+). In terms of biological role, specifically methylates the guanosine in position 1516 of 16S rRNA. The protein is Ribosomal RNA small subunit methyltransferase J of Shewanella baltica (strain OS195).